The primary structure comprises 246 residues: Probable transcriptional regulatory protein CKO_01097 (246 aa).

Positions 1-20 (MAGHSKWANTRHRKAAQDAK) are disordered.

It belongs to the TACO1 family.

It is found in the cytoplasm. In Citrobacter koseri (strain ATCC BAA-895 / CDC 4225-83 / SGSC4696), this protein is Probable transcriptional regulatory protein CKO_01097.